The sequence spans 586 residues: Inner membrane protein YejM (586 aa).

The Cytoplasmic portion of the chain corresponds to 1–20; sequence MVTHRQRYREKVSQMVSWGH. Residues 21 to 43 form a helical membrane-spanning segment; it reads WFALFNILLSLVIGSRYLFIADW. The Periplasmic segment spans residues 44-57; the sequence is PTTLAGRIYSYVSI. Residues 58 to 80 traverse the membrane as a helical segment; it reads IGHFSFLVFATYLLILFPLTFIV. Over 81–84 the chain is Cytoplasmic; it reads GSQR. Residues 85–103 traverse the membrane as a helical segment; sequence LMRFLSVILATAGMTLLLI. At 104 to 134 the chain is on the periplasmic side; it reads DSEVFTRFHLHLNPIVWQLVINPDENEMARD. A helical transmembrane segment spans residues 135–157; that stretch reads WQLMFISVPVILLLELVFATWSW. At 158-168 the chain is on the cytoplasmic side; it reads QKLRSLTRRRR. A helical transmembrane segment spans residues 169 to 191; it reads FARPLAAFLFIAFIASHVVYIWA. The Periplasmic portion of the chain corresponds to 192 to 586; that stretch reads DANFYRPITM…LTDEKRFIAN (395 aa).

To H.influenzae HI_0842.

It is found in the cell inner membrane. This is Inner membrane protein YejM (yejM) from Escherichia coli O157:H7.